A 358-amino-acid polypeptide reads, in one-letter code: Polyadenylate-binding protein-interacting protein 11 (358 aa).

A compositionally biased stretch (low complexity) spans 1-19 (MAVVETGAAATAADAGGVV). The tract at residues 1 to 45 (MAVVETGAAATAADAGGVVIQPPPSSPPSSMTSQDSGVSSDDQNH) is disordered. Residues 31–41 (MTSQDSGVSSD) are compositionally biased toward polar residues. The short motif at 92–102 (KLNPMAEEFVP) is the PAM2-like element. Positions 136 to 164 (GGYGNENGGFRRKKSFGQGKRRMNARTSM) are disordered. The span at 145–159 (FRRKKSFGQGKRRMN) shows a compositional bias: basic residues. The short motif at 146–157 (RRKKSFGQGKRR) is the Bipartite nuclear localization signal element. 2 consecutive RRM domains span residues 173–248 (RTVY…PSKT) and 270–346 (RTIY…PSKT).

As to expression, expressed in cauline leaves, stems, immature siliques and primary inflorescences.

The protein resides in the nucleus. This chain is Polyadenylate-binding protein-interacting protein 11 (CID11), found in Arabidopsis thaliana (Mouse-ear cress).